A 169-amino-acid chain; its full sequence is tRNA (cytidine(56)-2'-O)-methyltransferase (169 aa).

S-adenosyl-L-methionine contacts are provided by residues Leu-77, 103-107 (GSEKV), and 121-128 (IGNQPHSE).

It belongs to the aTrm56 family. Homodimer.

It localises to the cytoplasm. The enzyme catalyses cytidine(56) in tRNA + S-adenosyl-L-methionine = 2'-O-methylcytidine(56) in tRNA + S-adenosyl-L-homocysteine + H(+). Its function is as follows. Specifically catalyzes the AdoMet-dependent 2'-O-ribose methylation of cytidine at position 56 in tRNAs. The chain is tRNA (cytidine(56)-2'-O)-methyltransferase from Sulfurisphaera tokodaii (strain DSM 16993 / JCM 10545 / NBRC 100140 / 7) (Sulfolobus tokodaii).